The primary structure comprises 178 residues: Dual-action ribosomal maturation protein DarP (178 aa).

This sequence belongs to the DarP family.

Its subcellular location is the cytoplasm. In terms of biological role, member of a network of 50S ribosomal subunit biogenesis factors which assembles along the 30S-50S interface, preventing incorrect 23S rRNA structures from forming. Promotes peptidyl transferase center (PTC) maturation. This Haemophilus influenzae (strain PittEE) protein is Dual-action ribosomal maturation protein DarP.